The sequence spans 606 residues: NADH-ubiquinone oxidoreductase chain 5 (606 aa).

A run of 15 helical transmembrane segments spans residues 3–23, 38–58, 87–107, 124–144, 180–200, 216–236, 244–264, 276–296, 304–323, 328–350, 369–389, 404–424, 460–480, 483–503, and 586–606; these read VINLIPTLMLTSLIILTLPII, ITKTAVTYAFAISLIPTLLFI, FFSLTFMPIALFITWSIMEFS, LLLFLITMLILVSANNLLQLF, IGDMGFIMMMAWFTIHLNSWE, LLGLLLASAGKSAQFGLHPWL, TPVSALLHSSTMVMAGVFTLI, IQTSTLCLGAITTLFTAICAL, IIALSTSSQLGLMMVTIGIN, AFIHMCTHAFFKAMLFLSSGSII, MPITSTAIIIGSLALTGMPFL, MSYINTWALLITLIAVSMTAS, LILGSIFMGFLISMNTIPHTT, MTMPPHLKFMALAVTLLGFTV, and LMKLYFLSFLLSITLGLLIAL.

It belongs to the complex I subunit 5 family. Core subunit of respiratory chain NADH dehydrogenase (Complex I) which is composed of 45 different subunits.

Its subcellular location is the mitochondrion inner membrane. The enzyme catalyses a ubiquinone + NADH + 5 H(+)(in) = a ubiquinol + NAD(+) + 4 H(+)(out). Its function is as follows. Core subunit of the mitochondrial membrane respiratory chain NADH dehydrogenase (Complex I) which catalyzes electron transfer from NADH through the respiratory chain, using ubiquinone as an electron acceptor. Essential for the catalytic activity and assembly of complex I. The protein is NADH-ubiquinone oxidoreductase chain 5 (MT-ND5) of Loxodonta africana (African elephant).